The primary structure comprises 785 residues: Disintegrin and metalloproteinase domain-containing protein B (785 aa).

An N-terminal signal peptide occupies residues 1-26; sequence MRFLKSALPFVASALSLLSVQAAARS. Topologically, residues 27 to 703 are extracellular; that stretch reads QEPSAIQHVS…GSWVEQHKNL (677 aa). The 229-residue stretch at 279-507 folds into the Peptidase M12B domain; the sequence is KQVALVGIAA…NSVKSSCLSD (229 aa). Asn-322, Asn-329, and Asn-355 each carry an N-linked (GlcNAc...) asparagine glycan. 2 disulfide bridges follow: Cys-398–Cys-492 and Cys-446–Cys-464. His-429 contacts Zn(2+). Residue Glu-430 is part of the active site. The Zn(2+) site is built by His-433 and His-439. A Disintegrin domain is found at 516–605; sequence GSQCGNGIVE…TCPADSFKKD (90 aa). N-linked (GlcNAc...) asparagine glycans are attached at residues Asn-561, Asn-593, and Asn-640. Cys-577 and Cys-597 are joined by a disulfide. The helical transmembrane segment at 704 to 724 threads the bilayer; the sequence is VIGVACGVGGLLVLSILWCMI. The Cytoplasmic segment spans residues 725–785; the sequence is NRCRRARTVV…GPYQSATRYA (61 aa). Positions 737 to 785 are disordered; the sequence is PPMRPWPGPMPPPPPQMGQWAGPNRGYQGLRAEPPPPYPGPYQSATRYA. A compositionally biased stretch (pro residues) spans 739–752; sequence MRPWPGPMPPPPPQ.

The cofactor is Zn(2+).

It localises to the membrane. In terms of biological role, probable zinc protease. This chain is Disintegrin and metalloproteinase domain-containing protein B (ADM-B), found in Aspergillus fumigatus (strain ATCC MYA-4609 / CBS 101355 / FGSC A1100 / Af293) (Neosartorya fumigata).